Consider the following 122-residue polypeptide: Ribosomal protein eL22-like (122 aa).

S112, S118, and S120 each carry phosphoserine.

This sequence belongs to the eukaryotic ribosomal protein eL22 family.

This Homo sapiens (Human) protein is Ribosomal protein eL22-like (RPL22L1).